Reading from the N-terminus, the 435-residue chain is Exopolysaccharide production protein ExoQ (435 aa).

The next 10 helical transmembrane spans lie at 11–31 (PGAN…VFAY), 35–55 (FGQV…LVDY), 65–85 (YLWI…SAAP), 117–137 (GMIA…TYHY), 156–176 (LGFY…VLGE), 178–198 (GLWM…LLTS), 203–223 (SVLT…ITAL), 230–250 (LLFI…IYAG), 325–345 (VVET…TAFF), and 361–381 (MVLF…IDIL).

It localises to the cell membrane. The protein operates within glycan metabolism; exopolysaccharide biosynthesis. Functionally, involved in the production of exopolysaccharide. This is Exopolysaccharide production protein ExoQ (exoQ) from Rhizobium meliloti (strain 1021) (Ensifer meliloti).